The primary structure comprises 178 residues: Oligoribonuclease (178 aa).

Residues Leu7–Leu168 form the Exonuclease domain. Residue Tyr128 is part of the active site.

The protein belongs to the oligoribonuclease family.

It is found in the cytoplasm. 3'-to-5' exoribonuclease specific for small oligoribonucleotides. This chain is Oligoribonuclease, found in Francisella tularensis subsp. holarctica (strain OSU18).